The following is a 270-amino-acid chain: Carboxy-terminal domain RNA polymerase II polypeptide A small phosphatase 2 (270 aa).

Ser-5 carries the post-translational modification Phosphoserine. The 159-residue stretch at 96-254 folds into the FCP1 homology domain; it reads QDQGRICVVI…LNLIPVFEEL (159 aa). Asp-106 (4-aspartylphosphate intermediate) is an active-site residue. Mg(2+) is bound by residues Asp-106, Asp-108, and Asn-217. The active-site Proton donor is Asp-108.

In terms of assembly, monomer. Interacts with REST. The cofactor is Mg(2+). Expression is restricted to non-neuronal tissues.

It is found in the nucleus. It carries out the reaction O-phospho-L-seryl-[protein] + H2O = L-seryl-[protein] + phosphate. The enzyme catalyses O-phospho-L-threonyl-[protein] + H2O = L-threonyl-[protein] + phosphate. In terms of biological role, preferentially catalyzes the dephosphorylation of 'Ser-5' within the tandem 7 residue repeats in the C-terminal domain (CTD) of the largest RNA polymerase II subunit POLR2A. Negatively regulates RNA polymerase II transcription, possibly by controlling the transition from initiation/capping to processive transcript elongation. Recruited by REST to neuronal genes that contain RE-1 elements, leading to neuronal gene silencing in non-neuronal cells. This chain is Carboxy-terminal domain RNA polymerase II polypeptide A small phosphatase 2 (Ctdsp2), found in Mus musculus (Mouse).